Here is a 796-residue protein sequence, read N- to C-terminus: Fibroblast growth factor receptor 3 (796 aa).

Positions 1 to 19 (MLVWLCGLCLVTLAGGRSA) are cleaved as a signal peptide. Topologically, residues 20-358 (ARLPLTEGRP…AEPVPDVDTS (339 aa)) are extracellular. The Ig-like C2-type 1 domain occupies 21-119 (RLPLTEGRPT…VLRNVTVRVT (99 aa)). Cys-56 and Cys-102 form a disulfide bridge. 2 N-linked (GlcNAc...) asparagine glycosylation sites follow: Asn-91 and Asn-113. The disordered stretch occupies residues 117–142 (RVTDSPSSGDDEDDDEESESANAPKF). The span at 125–135 (GDDEDDDEESE) shows a compositional bias: acidic residues. 2 Ig-like C2-type domains span residues 140 to 233 (PKFT…YTLD) and 239 to 344 (PHRP…AWLT). Cysteines 165 and 217 form a disulfide. N-linked (GlcNAc...) asparagine glycans are attached at residues Asn-214, Asn-251, Asn-283, Asn-304, and Asn-317. A disulfide bridge links Cys-264 with Cys-328. A helical transmembrane segment spans residues 359 to 379 (VSILAAAGCVAVVILVVIIIF). Residues 380–796 (TYKMKMPSKK…HQQYNGVIRT (417 aa)) are Cytoplasmic-facing. The Protein kinase domain maps to 457 to 746 (LTLGKPLGEG…LTVTSTDEYL (290 aa)). Residues 463–471 (LGEGCFGQV) and Lys-493 each bind ATP. Asp-602 functions as the Proton acceptor in the catalytic mechanism. 4 positions are modified to phosphotyrosine; by autocatalysis: Tyr-632, Tyr-633, Tyr-709, and Tyr-745.

The protein belongs to the protein kinase superfamily. Tyr protein kinase family. Fibroblast growth factor receptor subfamily. In terms of assembly, monomer. Homodimer after ligand binding. Autophosphorylated. Binding of FGF family members together with heparan sulfate proteoglycan or heparin promotes receptor dimerization and autophosphorylation on tyrosine residues. Autophosphorylation occurs in trans between the two FGFR molecules present in the dimer. As to expression, undetectable in the adult skeletal muscle. Low levels of expression were detected in the liver, lung and kidney. Medium levels of expression were detected in the heart, spleen, intestine and eye. Highest expression is observed in the testis.

The protein localises to the cell membrane. It catalyses the reaction L-tyrosyl-[protein] + ATP = O-phospho-L-tyrosyl-[protein] + ADP + H(+). Its activity is regulated as follows. Present in an inactive conformation in the absence of bound ligand. Ligand binding leads to dimerization and activation by autophosphorylation on tyrosine residues. In terms of biological role, tyrosine-protein kinase that acts as a cell-surface receptor for fibroblast growth factors and plays an essential role in the regulation of cell proliferation, differentiation and apoptosis. Plays an essential role in the regulation of chondrocyte differentiation, proliferation and apoptosis, and is required for normal skeleton development. Regulates both osteogenesis and postnatal bone mineralization by osteoblasts. Promotes apoptosis in chondrocytes, but can also promote cancer cell proliferation. Phosphorylates PLCG1, CBL and FRS2. Ligand binding leads to the activation of several signaling cascades. Activation of PLCG1 leads to the production of the cellular signaling molecules diacylglycerol and inositol 1,4,5-trisphosphate. Phosphorylation of FRS2 triggers recruitment of GRB2, GAB1, PIK3R1 and SOS1, and mediates activation of RAS, MAPK1/ERK2, MAPK3/ERK1 and the MAP kinase signaling pathway, as well as of the AKT1 signaling pathway. In Pleurodeles waltl (Iberian ribbed newt), this protein is Fibroblast growth factor receptor 3 (FGFR3).